We begin with the raw amino-acid sequence, 256 residues long: Hydroxyacylglutathione hydrolase (256 aa).

7 residues coordinate Zn(2+): H55, H57, D59, H60, H113, D130, and H168.

It belongs to the metallo-beta-lactamase superfamily. Glyoxalase II family. As to quaternary structure, monomer. Zn(2+) is required as a cofactor.

It carries out the reaction an S-(2-hydroxyacyl)glutathione + H2O = a 2-hydroxy carboxylate + glutathione + H(+). The protein operates within secondary metabolite metabolism; methylglyoxal degradation; (R)-lactate from methylglyoxal: step 2/2. Functionally, thiolesterase that catalyzes the hydrolysis of S-D-lactoyl-glutathione to form glutathione and D-lactic acid. The polypeptide is Hydroxyacylglutathione hydrolase (Alkalilimnicola ehrlichii (strain ATCC BAA-1101 / DSM 17681 / MLHE-1)).